The sequence spans 322 residues: MAVYTDITEDELRNFLTQYDVGSLTSYKGIAEGVENSNFLLHTTKDPLILTLYEKRVEKNDLPFFLGLMQHLAAKGLSCPLPLPRKDGELLGELSGRPAALISFLEGMWLRKPEAKHCREVGKALAAMHLASEGFEIKRPNALSVDGWKVLWDKSEERADEVEKGLREEIRPEIDYLAAHWPKDLPAGVIHADLFQDNVFFLGDELSGLIDFYFACNDLLAYDVSICLNAWCFEKDGAYNVTKGKALLEGYQSVRPLSEAELEALPLLSRGSALRFFLTRLYDWLTTPAGALVVKKDPLEYLRKLRFHRTIANVAEYGLAGE.

The protein belongs to the pseudomonas-type ThrB family.

It catalyses the reaction L-homoserine + ATP = O-phospho-L-homoserine + ADP + H(+). It functions in the pathway amino-acid biosynthesis; L-threonine biosynthesis; L-threonine from L-aspartate: step 4/5. In Agrobacterium fabrum (strain C58 / ATCC 33970) (Agrobacterium tumefaciens (strain C58)), this protein is Homoserine kinase.